The sequence spans 251 residues: Ubiquinone/menaquinone biosynthesis C-methyltransferase UbiE (251 aa).

S-adenosyl-L-methionine is bound by residues Thr-74, Asp-95, and Asn-123–Ala-124.

It belongs to the class I-like SAM-binding methyltransferase superfamily. MenG/UbiE family.

The catalysed reaction is a 2-demethylmenaquinol + S-adenosyl-L-methionine = a menaquinol + S-adenosyl-L-homocysteine + H(+). The enzyme catalyses a 2-methoxy-6-(all-trans-polyprenyl)benzene-1,4-diol + S-adenosyl-L-methionine = a 5-methoxy-2-methyl-3-(all-trans-polyprenyl)benzene-1,4-diol + S-adenosyl-L-homocysteine + H(+). The protein operates within quinol/quinone metabolism; menaquinone biosynthesis; menaquinol from 1,4-dihydroxy-2-naphthoate: step 2/2. Its pathway is cofactor biosynthesis; ubiquinone biosynthesis. Its function is as follows. Methyltransferase required for the conversion of demethylmenaquinol (DMKH2) to menaquinol (MKH2) and the conversion of 2-polyprenyl-6-methoxy-1,4-benzoquinol (DDMQH2) to 2-polyprenyl-3-methyl-6-methoxy-1,4-benzoquinol (DMQH2). This is Ubiquinone/menaquinone biosynthesis C-methyltransferase UbiE from Shewanella sediminis (strain HAW-EB3).